Here is a 140-residue protein sequence, read N- to C-terminus: Small ribosomal subunit protein uS12 (140 aa).

Residues 1–20 (MPTINQLVRKGRQSKVVKSD) are disordered. At D102 the chain carries 3-methylthioaspartic acid. Positions 121–140 (DGRMQGRSKYGTKRPKAAKK) are disordered. Residues 130–140 (YGTKRPKAAKK) are compositionally biased toward basic residues.

Belongs to the universal ribosomal protein uS12 family. Part of the 30S ribosomal subunit. Contacts proteins S8 and S17. May interact with IF1 in the 30S initiation complex.

Its function is as follows. With S4 and S5 plays an important role in translational accuracy. In terms of biological role, interacts with and stabilizes bases of the 16S rRNA that are involved in tRNA selection in the A site and with the mRNA backbone. Located at the interface of the 30S and 50S subunits, it traverses the body of the 30S subunit contacting proteins on the other side and probably holding the rRNA structure together. The combined cluster of proteins S8, S12 and S17 appears to hold together the shoulder and platform of the 30S subunit. The sequence is that of Small ribosomal subunit protein uS12 from Exiguobacterium sibiricum (strain DSM 17290 / CCUG 55495 / CIP 109462 / JCM 13490 / 255-15).